The following is a 319-amino-acid chain: Peroxidase 13 (319 aa).

A signal peptide spans 1–22 (MITIALFLVLLYFHDQLGYSAA). 4 cysteine pairs are disulfide-bonded: Cys33–Cys111, Cys66–Cys71, Cys117–Cys315, and Cys196–Cys222. His64 functions as the Proton acceptor in the catalytic mechanism. The Ca(2+) site is built by Asp65, Val68, Gly70, Asp72, and Ser74. A substrate-binding site is contributed by Pro158. His189 serves as a coordination point for heme b. Thr190 serves as a coordination point for Ca(2+). Ca(2+) is bound by residues Asp235, Ser238, and Asp243. Asn280 is a glycosylation site (N-linked (GlcNAc...) asparagine).

Belongs to the peroxidase family. Classical plant (class III) peroxidase subfamily. The cofactor is heme b. It depends on Ca(2+) as a cofactor.

It is found in the secreted. The catalysed reaction is 2 a phenolic donor + H2O2 = 2 a phenolic radical donor + 2 H2O. In terms of biological role, removal of H(2)O(2), oxidation of toxic reductants, biosynthesis and degradation of lignin, suberization, auxin catabolism, response to environmental stresses such as wounding, pathogen attack and oxidative stress. These functions might be dependent on each isozyme/isoform in each plant tissue. This chain is Peroxidase 13 (PER13), found in Arabidopsis thaliana (Mouse-ear cress).